Reading from the N-terminus, the 262-residue chain is [LysW]-aminoadipate/[LysW]-glutamate kinase (262 aa).

Substrate-binding positions include 35–36 (GG), Arg62, and Asn167.

It belongs to the acetylglutamate kinase family. LysZ subfamily.

It localises to the cytoplasm. It catalyses the reaction [amino-group carrier protein]-C-terminal-N-(1,4-dicarboxybutan-1-yl)-L-glutamine + ATP = [amino-group carrier protein]-C-terminal-N-(1-carboxy-5-phosphooxy-5-oxopentan-1-yl)-L-glutamine + ADP. The catalysed reaction is [amino-group carrier protein]-C-terminal-gamma-(L-glutamyl)-L-glutamate + ATP = [amino-group carrier protein]-C-terminal-gamma-(5-phospho-L-glutamyl)-L-glutamate + ADP. Its pathway is amino-acid biosynthesis; L-lysine biosynthesis via AAA pathway; L-lysine from L-alpha-aminoadipate (Thermus route): step 2/5. It functions in the pathway amino-acid biosynthesis; L-arginine biosynthesis. In terms of biological role, involved in both the arginine and lysine biosynthetic pathways. Phosphorylates the LysW-bound precursors glutamate (for arginine biosynthesis), respectively alpha-aminoadipate (for lysine biosynthesis). The polypeptide is [LysW]-aminoadipate/[LysW]-glutamate kinase (Metallosphaera sedula (strain ATCC 51363 / DSM 5348 / JCM 9185 / NBRC 15509 / TH2)).